The following is a 288-amino-acid chain: NAD kinase (288 aa).

The active-site Proton acceptor is Asp73. Residues 73–74 (DG), Arg78, 144–145 (NE), Asp174, 185–190 (TAYSLS), and Ala209 contribute to the NAD(+) site.

This sequence belongs to the NAD kinase family. A divalent metal cation is required as a cofactor.

It is found in the cytoplasm. It carries out the reaction NAD(+) + ATP = ADP + NADP(+) + H(+). Functionally, involved in the regulation of the intracellular balance of NAD and NADP, and is a key enzyme in the biosynthesis of NADP. Catalyzes specifically the phosphorylation on 2'-hydroxyl of the adenosine moiety of NAD to yield NADP. This Porphyromonas gingivalis (strain ATCC 33277 / DSM 20709 / CIP 103683 / JCM 12257 / NCTC 11834 / 2561) protein is NAD kinase.